Reading from the N-terminus, the 556-residue chain is CTP synthase (556 aa).

The segment at 1–266 (MKYIFVTGGV…GKVVEDLLGL (266 aa)) is amidoligase domain. A CTP-binding site is contributed by Ser12. Ser12 serves as a coordination point for UTP. Residue 13–18 (SLGKGV) coordinates ATP. Tyr53 serves as a coordination point for L-glutamine. Position 70 (Asp70) interacts with ATP. Residues Asp70 and Glu140 each contribute to the Mg(2+) site. CTP contacts are provided by residues 147-149 (DIE), 187-192 (KTKPTQ), and Lys223. UTP-binding positions include 187 to 192 (KTKPTQ) and Lys223. In terms of domain architecture, Glutamine amidotransferase type-1 spans 291-544 (TIAIAGKYTE…VKAALRGQSS (254 aa)). Residue Gly356 participates in L-glutamine binding. Cys383 functions as the Nucleophile; for glutamine hydrolysis in the catalytic mechanism. L-glutamine contacts are provided by residues 384 to 387 (LGMQ), Glu407, and Arg467. Catalysis depends on residues His517 and Glu519.

Belongs to the CTP synthase family. Homotetramer.

It catalyses the reaction UTP + L-glutamine + ATP + H2O = CTP + L-glutamate + ADP + phosphate + 2 H(+). The enzyme catalyses L-glutamine + H2O = L-glutamate + NH4(+). The catalysed reaction is UTP + NH4(+) + ATP = CTP + ADP + phosphate + 2 H(+). Its pathway is pyrimidine metabolism; CTP biosynthesis via de novo pathway; CTP from UDP: step 2/2. With respect to regulation, allosterically activated by GTP, when glutamine is the substrate; GTP has no effect on the reaction when ammonia is the substrate. The allosteric effector GTP functions by stabilizing the protein conformation that binds the tetrahedral intermediate(s) formed during glutamine hydrolysis. Inhibited by the product CTP, via allosteric rather than competitive inhibition. Catalyzes the ATP-dependent amination of UTP to CTP with either L-glutamine or ammonia as the source of nitrogen. Regulates intracellular CTP levels through interactions with the four ribonucleotide triphosphates. In Deinococcus deserti (strain DSM 17065 / CIP 109153 / LMG 22923 / VCD115), this protein is CTP synthase.